Consider the following 196-residue polypeptide: Putative 3-methyladenine DNA glycosylase (196 aa).

This sequence belongs to the DNA glycosylase MPG family.

The polypeptide is Putative 3-methyladenine DNA glycosylase (Chlorobium luteolum (strain DSM 273 / BCRC 81028 / 2530) (Pelodictyon luteolum)).